Consider the following 215-residue polypeptide: Beta-crystallin A3 (215 aa).

Residue Met1 is modified to N-acetylmethionine. A compositionally biased stretch (low complexity) spans 1–16; the sequence is METQAEQQELETLPTT. Residues 1–29 form a disordered region; that stretch reads METQAEQQELETLPTTKMAQTNPTPGSLG. The interval 1 to 30 is N-terminal arm; that stretch reads METQAEQQELETLPTTKMAQTNPTPGSLGP. N-acetylalanine is present on Glu2. 2 Beta/gamma crystallin 'Greek key' domains span residues 31–70 and 71–117; these read WKITIYDQENFQGKRMEFTSSCPNVSERSFDNVRSLKVES and GAWI…RPIC. Residues Cys82 and Cys117 each carry the S-glutathionyl cysteine; alternate modification. Residues Cys82 and Cys117 each carry the S-methylcysteine; alternate modification. The tract at residues 118 to 123 is connecting peptide; that stretch reads SANHKE. Beta/gamma crystallin 'Greek key' domains lie at 124–165 and 166–214; these read SKMT…KIQS and GAWV…RRIQ. An S-methylcysteine modification is found at Cys185.

Belongs to the beta/gamma-crystallin family. In terms of assembly, homo/heterodimer, or complexes of higher-order. The structure of beta-crystallin oligomers seems to be stabilized through interactions between the N-terminal arms. Interacts with CRYBA1. In terms of processing, specific cleavages in the N-terminal arm occur during lens maturation and give rise to several truncated forms. Cleavages do not seem to have adverse effects on solubility. S-methylation and glutathionylation occur in normal young lenses and do not seem to be detrimental.

In terms of biological role, crystallins are the dominant structural components of the vertebrate eye lens. The protein is Beta-crystallin A3 of Homo sapiens (Human).